We begin with the raw amino-acid sequence, 1097 residues long: Mitochondrial distribution and morphology protein 34 (1097 aa).

One can recognise an SMP-LTD domain in the interval 1-198; the sequence is MSFNFKWPTF…LPGIIHRLSQ (198 aa). 8 disordered regions span residues 204–305, 317–343, 390–427, 480–520, 556–600, 645–675, 716–817, and 923–1097; these read EAKS…PLHS, AAFP…SGFS, QSDD…LDAV, DDQP…TSSL, PEVD…SSRT, LDAE…RDLS, GQNA…SPGV, and GSSA…AIRE. Residues 205 to 229 are compositionally biased toward basic and acidic residues; sequence AKSEKDKVKQKAEAEEPPARSREPT. Residues 252–263 show a composition bias toward basic residues; it reads RKSHSKAKKHSR. Over residues 274–283 the composition is skewed to low complexity; the sequence is SPCQSPQRPR. Over residues 284–293 the composition is skewed to basic residues; sequence QSPRRPRHVA. Basic and acidic residues predominate over residues 406–416; sequence SSSHDGKHDEG. Low complexity-rich tracts occupy residues 508–519 and 572–586; these read SSRSDRSACTSS and GGTP…RFGS. The segment covering 662–675 has biased composition (polar residues); it reads TNPTSRESSYRDLS. The span at 759 to 779 shows a compositional bias: low complexity; it reads GMSATPARTRASAAASARSRP. Over residues 784–796 the composition is skewed to polar residues; it reads YATSPPGDSSGWQ. The segment covering 923–943 has biased composition (low complexity); the sequence is GSSAASGTGTTSGSSQTGANA. A compositionally biased stretch (polar residues) spans 1004-1024; sequence SNKPNNTSTGQGEDSQDNSAA. Positions 1045–1059 are enriched in low complexity; sequence ASGSSASSAITDSSS.

Belongs to the MDM34 family. As to quaternary structure, component of the ER-mitochondria encounter structure (ERMES) or MDM complex, composed of MMM1, MDM10, MDM12 and MDM34.

It is found in the mitochondrion outer membrane. In terms of biological role, component of the ERMES/MDM complex, which serves as a molecular tether to connect the endoplasmic reticulum (ER) and mitochondria. Components of this complex are involved in the control of mitochondrial shape and protein biogenesis, and function in nonvesicular lipid trafficking between the ER and mitochondria. MDM34 is required for the interaction of the ER-resident membrane protein MMM1 and the outer mitochondrial membrane-resident beta-barrel protein MDM10. In Mycosarcoma maydis (Corn smut fungus), this protein is Mitochondrial distribution and morphology protein 34.